Reading from the N-terminus, the 532-residue chain is uncharacterized protein (532 aa).

Disordered regions lie at residues 26 to 84, 97 to 129, and 157 to 470; these read KALR…TDSE, VFDE…QVGR, and SKAA…HTCQ. Residues 30-40 show a composition bias toward low complexity; sequence GNNNGSSTSGG. Residues 67-80 are compositionally biased toward polar residues; sequence DIISQARRQVSLSR. Residues 157–181 are compositionally biased toward basic and acidic residues; that stretch reads SKAAGEESKRHAHFESIQEEEKISE. Over residues 198 to 213 the composition is skewed to low complexity; it reads IQSGSESSDSDSIIFD. Residues 237–249 show a composition bias toward basic and acidic residues; sequence VEKKIEKPAVKEQ. Low complexity-rich tracts occupy residues 259–290, 298–315, and 326–335; these read PTPT…SASE, ESQV…SSSK, and SSSSSASTIS. The span at 347-356 shows a compositional bias: basic residues; the sequence is KTKKPDKKRA. Composition is skewed to basic and acidic residues over residues 357–368, 389–403, 410–419, and 437–448; these read KPDDIRQNKKPE, STVR…ESLK, KSSEKMEKPR, and RDAEREQDIERR. Basic residues predominate over residues 449–461; it reads REKRARRFRSRRR.

This is an uncharacterized protein from Caenorhabditis elegans.